The primary structure comprises 777 residues: Kelch domain-containing protein 7A (777 aa).

The chain crosses the membrane as a helical span at residues Val-21 to Tyr-38. The tract at residues Ala-43–Cys-207 is disordered. Ser-86 is modified (phosphoserine). A compositionally biased stretch (basic and acidic residues) spans Thr-113 to Gly-127. The N-linked (GlcNAc...) asparagine glycan is linked to Asn-257. Positions Leu-313–Gly-359 are disordered. The segment covering Leu-326–Ala-336 has biased composition (gly residues). 5 Kelch repeats span residues Thr-328–Glu-374, Gln-492–Leu-538, Tyr-541–Gly-589, His-590–Arg-632, and Glu-635–Gly-677. A Phosphoserine modification is found at Ser-365.

Its subcellular location is the membrane. The chain is Kelch domain-containing protein 7A (KLHDC7A) from Homo sapiens (Human).